The chain runs to 132 residues: Small ribosomal subunit protein uS11 (132 aa).

It belongs to the universal ribosomal protein uS11 family. As to quaternary structure, part of the 30S ribosomal subunit. Interacts with proteins S7 and S18. Binds to IF-3.

Its function is as follows. Located on the platform of the 30S subunit, it bridges several disparate RNA helices of the 16S rRNA. Forms part of the Shine-Dalgarno cleft in the 70S ribosome. This Chlamydia trachomatis serovar D (strain ATCC VR-885 / DSM 19411 / UW-3/Cx) protein is Small ribosomal subunit protein uS11.